We begin with the raw amino-acid sequence, 434 residues long: Adenylosuccinate synthetase (434 aa).

GTP-binding positions include 22 to 28 (GDEGKGK) and 50 to 52 (GHT). The Proton acceptor role is filled by Asp-23. Mg(2+)-binding residues include Asp-23 and Gly-50. IMP contacts are provided by residues 23–26 (DEGK), 48–51 (NAGH), Thr-139, Arg-153, Gln-234, Thr-249, and Arg-313. His-51 functions as the Proton donor in the catalytic mechanism. 309–315 (ATTGRKR) lines the substrate pocket. GTP contacts are provided by residues Arg-315, 341–343 (KLD), and 423–425 (SVG).

It belongs to the adenylosuccinate synthetase family. In terms of assembly, homodimer. Requires Mg(2+) as cofactor.

The protein localises to the cytoplasm. It carries out the reaction IMP + L-aspartate + GTP = N(6)-(1,2-dicarboxyethyl)-AMP + GDP + phosphate + 2 H(+). Its pathway is purine metabolism; AMP biosynthesis via de novo pathway; AMP from IMP: step 1/2. Functionally, plays an important role in the de novo pathway of purine nucleotide biosynthesis. Catalyzes the first committed step in the biosynthesis of AMP from IMP. The polypeptide is Adenylosuccinate synthetase (Chlorobium phaeovibrioides (strain DSM 265 / 1930) (Prosthecochloris vibrioformis (strain DSM 265))).